Reading from the N-terminus, the 333-residue chain is HTH-type transcriptional regulator Cphy_2742 (333 aa).

The HTH lacI-type domain maps to 1-55; the sequence is MNIYDVSQKAGVSIATVSRVINGNPNVSEKTKQKVLDVMKEIGYTPNVFARGLGL. The segment at residues 3-22 is a DNA-binding region (H-T-H motif); it reads IYDVSQKAGVSIATVSRVIN.

It localises to the cytoplasm. In terms of biological role, involved in control of pectin and galacturonic acid metabolism. Probably represses a comprehensive set of pectin fermentation genes by binding a conserved palindrome at or downstream of their transcription start site to block transcription. In the presence of galacturonic acid may activate transcription of acetate synthesis and other aspects of carbon metabolism. In Lachnoclostridium phytofermentans (strain ATCC 700394 / DSM 18823 / ISDg) (Clostridium phytofermentans), this protein is HTH-type transcriptional regulator Cphy_2742.